An 88-amino-acid polypeptide reads, in one-letter code: LYR motif-containing protein 2 (88 aa).

A mitochondrion-targeting transit peptide spans 1–19 (MAASRLPPATLTLKQFVRR).

Belongs to the complex I LYR family.

Its subcellular location is the mitochondrion. Involved in efficient integration of the N-module into mitochondrial respiratory chain complex I. In Pongo abelii (Sumatran orangutan), this protein is LYR motif-containing protein 2 (LYRM2).